Here is a 138-residue protein sequence, read N- to C-terminus: Class I hydrophobin 1 (138 aa).

The signal sequence occupies residues M1 to A19. 4 disulfide bridges follow: C45-C113, C53-C107, C54-C91, and C114-C131.

The protein belongs to the fungal hydrophobin family. Interacts with the lipid droplet coating protein Cap20.

Its subcellular location is the secreted. It is found in the lipid droplet. Its function is as follows. Aerial growth, conidiation, and dispersal of filamentous fungi in the environment rely upon a capability of their secreting small amphipathic proteins called hydrophobins (HPBs) with low sequence identity. Class I can self-assemble into an outermost layer of rodlet bundles on aerial cell surfaces, conferring cellular hydrophobicity that supports fungal growth, development and dispersal; whereas Class II form highly ordered films at water-air interfaces through intermolecular interactions but contribute nothing to the rodlet structure. Hydr1 is a class I hydrophobin involved in spore germination, appressorium formation, but not in the formation of the rodlet layer of conidia. Responsible for the full virulence on rubber tree leaves. This is Class I hydrophobin 1 from Colletotrichum siamense (Anthracnose fungus).